The sequence spans 189 residues: Putative dihydrofolate reductase (189 aa).

The DHFR domain occupies 3–185 (KMNLIVAMDA…LKFEFCKWKV (183 aa)). NADP(+) is bound by residues alanine 9 and 15–21 (GIGKNGV). 29–34 (DMQYFA) contributes to the substrate binding site. Residue 53-55 (RKC) coordinates NADP(+). Arginine 69 contributes to the substrate binding site. NADP(+) contacts are provided by residues 75 to 77 (SRQ) and 115 to 122 (GGAEIYDL).

It belongs to the dihydrofolate reductase family.

The enzyme catalyses (6S)-5,6,7,8-tetrahydrofolate + NADP(+) = 7,8-dihydrofolate + NADPH + H(+). The protein operates within cofactor biosynthesis; tetrahydrofolate biosynthesis; 5,6,7,8-tetrahydrofolate from 7,8-dihydrofolate: step 1/1. Key enzyme in folate metabolism. Catalyzes an essential reaction for de novo glycine and purine synthesis, and for DNA precursor synthesis. In Caenorhabditis elegans, this protein is Putative dihydrofolate reductase (dhfr-1).